We begin with the raw amino-acid sequence, 335 residues long: Tryptophan--tRNA ligase (335 aa).

ATP is bound by residues 11–13 and 19–20; these read QPT and GN. The 'HIGH' region motif lies at 12–20; it reads PTGNLHLGN. L-tryptophan is bound at residue Asp135. ATP contacts are provided by residues 147-149, Val189, and 198-202; these read GED and KMSKS. Residues 198–202 carry the 'KMSKS' region motif; that stretch reads KMSKS.

It belongs to the class-I aminoacyl-tRNA synthetase family. As to quaternary structure, homodimer.

It localises to the cytoplasm. The enzyme catalyses tRNA(Trp) + L-tryptophan + ATP = L-tryptophyl-tRNA(Trp) + AMP + diphosphate + H(+). Functionally, catalyzes the attachment of tryptophan to tRNA(Trp). This is Tryptophan--tRNA ligase from Nostoc sp. (strain PCC 7120 / SAG 25.82 / UTEX 2576).